The following is a 496-amino-acid chain: MHAKSLTELRAALAAKECSAVELAQHYLKRIDAARDLNAFVHVDADLTLAQAKAADAELARGAGGALTGLPIAHKDVFVTRGWRSTAGSKMLANYESPFDATVVARLQAAGMVTLGKTNMDEFAMGSSNENSAFGAVKNPWDTNAVPGGSSGGSSAAVAARLAPAATGTDTGGSIRQPASFAGVTGIKPTYGRVSRYGMIAFASSLDQGGPMAQSASDCALLLNAMAGFDERDSTSLERDDEDFTRHLGQPWAAGNDAGKPLAGLRIGLPNEYFGAGLADDVRATIDAALKQYEALGATLVPVSLPKTELSIPVYYVIAPAEASSNLSRFDGVRFGHRAAQYGDLLDMYKKSRAEGFGPEVKRRILVGTYVLSHGYYDAYYLQAQKIRRIIANDFQEAFKSCDVIMGPASPTVAWDLGAKGDDPVQMYLADIYTLSVSLAGLPGMSVPCGFGAGANAKRPVGLQIIGNYFNEARMLQVADAFQRATDWHKQVPAGV.

Catalysis depends on charge relay system residues lysine 75 and serine 150. Serine 174 (acyl-ester intermediate) is an active-site residue.

It belongs to the amidase family. GatA subfamily. In terms of assembly, heterotrimer of A, B and C subunits.

It catalyses the reaction L-glutamyl-tRNA(Gln) + L-glutamine + ATP + H2O = L-glutaminyl-tRNA(Gln) + L-glutamate + ADP + phosphate + H(+). Allows the formation of correctly charged Gln-tRNA(Gln) through the transamidation of misacylated Glu-tRNA(Gln) in organisms which lack glutaminyl-tRNA synthetase. The reaction takes place in the presence of glutamine and ATP through an activated gamma-phospho-Glu-tRNA(Gln). The protein is Glutamyl-tRNA(Gln) amidotransferase subunit A of Burkholderia cenocepacia (strain HI2424).